Consider the following 185-residue polypeptide: Large ribosomal subunit protein uL16m (185 aa).

The protein belongs to the universal ribosomal protein uL16 family.

The protein resides in the mitochondrion. In Oryza sativa subsp. japonica (Rice), this protein is Large ribosomal subunit protein uL16m (RPL16).